The sequence spans 249 residues: MEPAKMAPIKNAPRDALVMAQILKDMGITEYEPRVINQMLEFAFRYVTTILDDAKIYSSHAKKPTVDADDVRLAIQCRADQSFTSPPPRDFLLDIARQKNQTPLPLIKPYAGPRLPPDRYCLTAPNYRLKSLVKKGPNQGRLVPRLSAVSSRPTTPPVAPPQAVSGPNKAATPVSVTSQRFAVQIPPSQSTPAKPAPAATAVQNVLINPSMIGPKNILITTSMVSSQNTATDSNPLKRKHDDDDDNDTM.

Residue Met-1 is modified to N-acetylmethionine. Phosphoserine is present on Ser-147. Positions 148–171 (AVSSRPTTPPVAPPQAVSGPNKAA) are disordered. The residue at position 172 (Thr-172) is a Phosphothreonine. Ser-175 carries the post-translational modification Phosphoserine. Residues 224–234 (VSSQNTATDSN) show a composition bias toward polar residues. Residues 224 to 249 (VSSQNTATDSNPLKRKHDDDDDNDTM) are disordered.

The protein belongs to the TAF9 family. As to quaternary structure, binds TAF5 and TAF6. Component of TFIID and the TATA-binding protein-free TAF complex (TFTC). TFIID is composed of TATA binding protein (TBP) and a number of TBP-associated factors (TAFs). Binds N-terminal domain of p53/TP53 which is essential for transcription.

The protein resides in the nucleus. Its function is as follows. Essential for cell viability. TAF9 and TAF9B are involved in transcriptional activation as well as repression of distinct but overlapping sets of genes. May have a role in gene regulation associated with apoptosis. TAFs are components of the transcription factor IID (TFIID) complex, the TBP-free TAFII complex (TFTC), the PCAF histone acetylase complex and the STAGA transcription coactivator-HAT complex. TFIID or TFTC are essential for the regulation of RNA polymerase II-mediated transcription. In Mus musculus (Mouse), this protein is Transcription initiation factor TFIID subunit 9B (Taf9b).